Here is a 181-residue protein sequence, read N- to C-terminus: Trafficking protein particle complex subunit 3 homolog (181 aa).

The S-palmitoyl cysteine moiety is linked to residue Cys-70.

It belongs to the TRAPP small subunits family. BET3 subfamily. In terms of assembly, homodimer. Part of the multisubunit TRAPP (transport protein particle) complex.

It localises to the golgi apparatus. Its subcellular location is the cis-Golgi network. The protein resides in the endoplasmic reticulum. Its function is as follows. May play a role in vesicular transport from endoplasmic reticulum to Golgi. Required for the systemic spread of the RNAi response. This chain is Trafficking protein particle complex subunit 3 homolog, found in Caenorhabditis briggsae.